Reading from the N-terminus, the 617-residue chain is Probable Xaa-Pro aminopeptidase P (617 aa).

Mn(2+) is bound by residues aspartate 414, aspartate 425, glutamate 523, and glutamate 537.

The protein belongs to the peptidase M24B family. It depends on Mn(2+) as a cofactor.

The enzyme catalyses Release of any N-terminal amino acid, including proline, that is linked to proline, even from a dipeptide or tripeptide.. Functionally, catalyzes the removal of a penultimate prolyl residue from the N-termini of peptides. The chain is Probable Xaa-Pro aminopeptidase P (AMPP) from Ajellomyces capsulatus (strain NAm1 / WU24) (Darling's disease fungus).